A 121-amino-acid polypeptide reads, in one-letter code: Large ribosomal subunit protein bL12 (121 aa).

Belongs to the bacterial ribosomal protein bL12 family. In terms of assembly, homodimer. Part of the ribosomal stalk of the 50S ribosomal subunit. Forms a multimeric L10(L12)X complex, where L10 forms an elongated spine to which 2 to 4 L12 dimers bind in a sequential fashion. Binds GTP-bound translation factors.

Forms part of the ribosomal stalk which helps the ribosome interact with GTP-bound translation factors. Is thus essential for accurate translation. The protein is Large ribosomal subunit protein bL12 of Halalkalibacterium halodurans (strain ATCC BAA-125 / DSM 18197 / FERM 7344 / JCM 9153 / C-125) (Bacillus halodurans).